A 184-amino-acid chain; its full sequence is Cathelicidin-related peptide Pt_CRAMP1 (184 aa).

The first 22 residues, 1 to 22 (MEGFFWKTWLVVAAFAIGGTSS), serve as a signal peptide directing secretion. A propeptide spanning residues 23–150 (LPHKPLTYEE…EDEKDQPRRV (128 aa)) is cleaved from the precursor. 2 disulfides stabilise this stretch: Cys-81–Cys-92 and Cys-103–Cys-120. Positions 125 to 144 (EDEEQNQEEEEEEEKEEDEK) are enriched in acidic residues. The interval 125 to 147 (EDEEQNQEEEEEEEKEEDEKDQP) is disordered.

This sequence belongs to the cathelicidin family. In terms of tissue distribution, expressed by the venom gland.

The protein resides in the secreted. It localises to the target cell membrane. Functionally, potent antimicrobial peptide against Gram-negative (MIC=2 ug/ml against E.coli ATCC 25922, MIC=8 ug/ml against P.aeruginosa) and Gram-positive bacteria (MIC=32 ug/ml against E.faecalis, MIC=32 ug/ml against S.aureus). Adopts an amphipathic alpha helical conformation, that may allow to partition into the target membrane. High hemolytic activities have been observed on mammalian cells. The protein is Cathelicidin-related peptide Pt_CRAMP1 of Pseudonaja textilis (Eastern brown snake).